Reading from the N-terminus, the 446-residue chain is tRNA modification GTPase MnmE (446 aa).

Arg24, Glu81, and Lys120 together coordinate (6S)-5-formyl-5,6,7,8-tetrahydrofolate. One can recognise a TrmE-type G domain in the interval 216 to 368; that stretch reads GLHAVLIGPP…LHIRLRELAL (153 aa). Asn226 contributes to the K(+) binding site. GTP contacts are provided by residues 226-231, 245-251, and 270-273; these read NAGKSS, TDVAGTT, and DTAG. Residue Ser230 participates in Mg(2+) binding. K(+) is bound by residues Thr245, Val247, and Thr250. A Mg(2+)-binding site is contributed by Thr251. Lys446 is a (6S)-5-formyl-5,6,7,8-tetrahydrofolate binding site.

The protein belongs to the TRAFAC class TrmE-Era-EngA-EngB-Septin-like GTPase superfamily. TrmE GTPase family. Homodimer. Heterotetramer of two MnmE and two MnmG subunits. K(+) serves as cofactor.

Its subcellular location is the cytoplasm. Functionally, exhibits a very high intrinsic GTPase hydrolysis rate. Involved in the addition of a carboxymethylaminomethyl (cmnm) group at the wobble position (U34) of certain tRNAs, forming tRNA-cmnm(5)s(2)U34. In Xanthomonas oryzae pv. oryzae (strain KACC10331 / KXO85), this protein is tRNA modification GTPase MnmE.